The chain runs to 366 residues: 3-dehydroquinate synthase (366 aa).

NAD(+) is bound by residues 74–79, 108–112, 132–133, Lys144, Lys153, and 171–174; these read SGEAAK, GVVGD, TT, and FLRT. Positions 186, 249, and 266 each coordinate Zn(2+).

Belongs to the sugar phosphate cyclases superfamily. Dehydroquinate synthase family. It depends on Co(2+) as a cofactor. Zn(2+) serves as cofactor. NAD(+) is required as a cofactor.

Its subcellular location is the cytoplasm. The catalysed reaction is 7-phospho-2-dehydro-3-deoxy-D-arabino-heptonate = 3-dehydroquinate + phosphate. It functions in the pathway metabolic intermediate biosynthesis; chorismate biosynthesis; chorismate from D-erythrose 4-phosphate and phosphoenolpyruvate: step 2/7. In terms of biological role, catalyzes the conversion of 3-deoxy-D-arabino-heptulosonate 7-phosphate (DAHP) to dehydroquinate (DHQ). This Geobacillus thermodenitrificans (strain NG80-2) protein is 3-dehydroquinate synthase.